A 361-amino-acid polypeptide reads, in one-letter code: MLYNLLLPHIHNSHIANLFHYITFRSGLAIIITLSLSFVTGPILIKFLRTLQKNGQPIRLDGPESHQTKAGTPTMGGIMIILSSCLATLLLADLTNKYIWITLFGFISFGIIGFMDDYAKVTKNNHYGVRGKSKLLLQGIISLIICILLEYTDKNPSHLLNIPFFKNLSLDLGYFYIVFAIFVIVGSSNAVNLTDGLDGLATVPIAFTAGSFALISYLVGNLIYSNYLQLTYIPNTGELTVLCAGLVGSCLGFLWFNAQPAEVFMGDTGSLSLGSILGIISVITKHEVVLSIVGGLFVVETTSVILQVYYFKATKGKRIFKMAPLHHHFEKHGWEESKVVIRFWIISVIFALIGLSSLKLR.

The next 10 helical transmembrane spans lie at 28 to 48 (LAII…IKFL), 74 to 94 (TMGG…LADL), 99 to 119 (IWIT…DDYA), 133 to 153 (SKLL…EYTD), 168 to 188 (LSLD…VGSS), 203 to 223 (VPIA…GNLI), 236 to 256 (TGEL…FLWF), 263 to 283 (VFMG…ISVI), 288 to 308 (VVLS…ILQV), and 338 to 358 (KVVI…LSSL).

This sequence belongs to the glycosyltransferase 4 family. MraY subfamily. Mg(2+) serves as cofactor.

The protein resides in the cell inner membrane. It carries out the reaction UDP-N-acetyl-alpha-D-muramoyl-L-alanyl-gamma-D-glutamyl-meso-2,6-diaminopimeloyl-D-alanyl-D-alanine + di-trans,octa-cis-undecaprenyl phosphate = di-trans,octa-cis-undecaprenyl diphospho-N-acetyl-alpha-D-muramoyl-L-alanyl-D-glutamyl-meso-2,6-diaminopimeloyl-D-alanyl-D-alanine + UMP. It participates in cell wall biogenesis; peptidoglycan biosynthesis. In terms of biological role, catalyzes the initial step of the lipid cycle reactions in the biosynthesis of the cell wall peptidoglycan: transfers peptidoglycan precursor phospho-MurNAc-pentapeptide from UDP-MurNAc-pentapeptide onto the lipid carrier undecaprenyl phosphate, yielding undecaprenyl-pyrophosphoryl-MurNAc-pentapeptide, known as lipid I. The chain is Phospho-N-acetylmuramoyl-pentapeptide-transferase from Rickettsia canadensis (strain McKiel).